A 91-amino-acid chain; its full sequence is Small ribosomal subunit protein bS20 (91 aa).

Belongs to the bacterial ribosomal protein bS20 family.

Functionally, binds directly to 16S ribosomal RNA. This is Small ribosomal subunit protein bS20 from Acidithiobacillus ferrooxidans (strain ATCC 23270 / DSM 14882 / CIP 104768 / NCIMB 8455) (Ferrobacillus ferrooxidans (strain ATCC 23270)).